Consider the following 199-residue polypeptide: RNA-free ribonuclease P (199 aa).

This sequence belongs to the HARP family.

The enzyme catalyses Endonucleolytic cleavage of RNA, removing 5'-extranucleotides from tRNA precursor.. In terms of biological role, RNA-free RNase P that catalyzes the removal of the 5'-leader sequence from pre-tRNA to produce the mature 5'-terminus. The polypeptide is RNA-free ribonuclease P (Thermococcus onnurineus (strain NA1)).